The following is a 455-amino-acid chain: Probable glycine dehydrogenase (decarboxylating) subunit 1 (455 aa).

The protein belongs to the GcvP family. N-terminal subunit subfamily. In terms of assembly, the glycine cleavage system is composed of four proteins: P, T, L and H. In this organism, the P 'protein' is a heterodimer of two subunits.

The catalysed reaction is N(6)-[(R)-lipoyl]-L-lysyl-[glycine-cleavage complex H protein] + glycine + H(+) = N(6)-[(R)-S(8)-aminomethyldihydrolipoyl]-L-lysyl-[glycine-cleavage complex H protein] + CO2. The glycine cleavage system catalyzes the degradation of glycine. The P protein binds the alpha-amino group of glycine through its pyridoxal phosphate cofactor; CO(2) is released and the remaining methylamine moiety is then transferred to the lipoamide cofactor of the H protein. In Saccharolobus islandicus (strain Y.G.57.14 / Yellowstone #1) (Sulfolobus islandicus), this protein is Probable glycine dehydrogenase (decarboxylating) subunit 1.